Reading from the N-terminus, the 202-residue chain is MANKFETIEAANRTEFGKGSARRARVAGLVPAVVYGADMESNLHITLNHRDFAGLVRRNGVNAVMELDVEGVKQLAMIKHIDQNVLTFNIDHVDLLAITRGEKVEVEIPVIVEGQPAPNTMFVQDADTIRVEADALNIPEEIVVSIEGMELGSQITAGDIKLDDDMTLVDDAELLIANVVLPAVEEAPAEDEEGESEGESEA.

This sequence belongs to the bacterial ribosomal protein bL25 family. CTC subfamily. In terms of assembly, part of the 50S ribosomal subunit; part of the 5S rRNA/L5/L18/L25 subcomplex. Contacts the 5S rRNA. Binds to the 5S rRNA independently of L5 and L18.

This is one of the proteins that binds to the 5S RNA in the ribosome where it forms part of the central protuberance. The polypeptide is Large ribosomal subunit protein bL25 (Corynebacterium efficiens (strain DSM 44549 / YS-314 / AJ 12310 / JCM 11189 / NBRC 100395)).